A 95-amino-acid polypeptide reads, in one-letter code: Integration host factor subunit beta (95 aa).

The tract at residues 52–95 is disordered; the sequence is SLHHRPPRVGRNPKTGESVHLPSRRVPHFKPGKELRDRVNSIKD. Over residues 82-95 the composition is skewed to basic and acidic residues; that stretch reads PGKELRDRVNSIKD.

It belongs to the bacterial histone-like protein family. In terms of assembly, heterodimer of an alpha and a beta chain.

Functionally, this protein is one of the two subunits of integration host factor, a specific DNA-binding protein that functions in genetic recombination as well as in transcriptional and translational control. This Methylococcus capsulatus (strain ATCC 33009 / NCIMB 11132 / Bath) protein is Integration host factor subunit beta.